We begin with the raw amino-acid sequence, 334 residues long: tRNA uridine(34) hydroxylase (334 aa).

The Rhodanese domain occupies 123–217 (SDPDVILVDT…YLEEVKAEES (95 aa)). The Cysteine persulfide intermediate role is filled by cysteine 177.

It belongs to the TrhO family.

It carries out the reaction uridine(34) in tRNA + AH2 + O2 = 5-hydroxyuridine(34) in tRNA + A + H2O. Its function is as follows. Catalyzes oxygen-dependent 5-hydroxyuridine (ho5U) modification at position 34 in tRNAs. In Shewanella baltica (strain OS223), this protein is tRNA uridine(34) hydroxylase.